A 191-amino-acid polypeptide reads, in one-letter code: MANISTSEMRSGSKVMVDGDPCAIIDNEHVKPGKGQAFNRIKLRNLKTGRVWERTFKSGDTLETADVMDTDMEYLYTDGEFWHFMAVDGSFEQHAADETAVGDTIKWLKEQEKYVVTLYNGAPLAVAAPNFIELEVKETDPGVKGDTANGGSKPAFLVTGAMVRVPLFINIGEVLRVDTRTGEYVSRATGK.

Lysine 34 carries the post-translational modification N6-(3,6-diaminohexanoyl)-5-hydroxylysine.

The protein belongs to the elongation factor P family. Post-translationally, may be beta-lysylated on the epsilon-amino group of Lys-34 by the combined action of EpmA and EpmB, and then hydroxylated on the C5 position of the same residue by EpmC (if this protein is present). Lysylation is critical for the stimulatory effect of EF-P on peptide-bond formation. The lysylation moiety may extend toward the peptidyltransferase center and stabilize the terminal 3-CCA end of the tRNA. Hydroxylation of the C5 position on Lys-34 may allow additional potential stabilizing hydrogen-bond interactions with the P-tRNA.

It is found in the cytoplasm. It functions in the pathway protein biosynthesis; polypeptide chain elongation. Its function is as follows. Involved in peptide bond synthesis. Alleviates ribosome stalling that occurs when 3 or more consecutive Pro residues or the sequence PPG is present in a protein, possibly by augmenting the peptidyl transferase activity of the ribosome. Modification of Lys-34 is required for alleviation. The chain is Elongation factor P from Marinomonas sp. (strain MWYL1).